A 107-amino-acid chain; its full sequence is Ferredoxin (107 aa).

2 4Fe-4S ferredoxin-type domains span residues glutamate 8–asparagine 37 and glycine 38–glutamate 67. [4Fe-4S] cluster is bound by residues cysteine 17, cysteine 20, and cysteine 23. Residues cysteine 27, cysteine 47, and cysteine 53 each contribute to the [3Fe-4S] cluster site. Cysteine 57 is a [4Fe-4S] cluster binding site.

In terms of assembly, monomer. [4Fe-4S] cluster is required as a cofactor. [3Fe-4S] cluster serves as cofactor. Post-translationally, the N-terminus is blocked.

Its function is as follows. Ferredoxins are iron-sulfur proteins that transfer electrons in a wide variety of metabolic reactions. The polypeptide is Ferredoxin (Pyrobaculum islandicum (strain DSM 4184 / JCM 9189 / GEO3)).